A 217-amino-acid chain; its full sequence is Small ribosomal subunit protein uS3c (217 aa).

Residues isoleucine 47–isoleucine 118 form the KH type-2 domain.

Belongs to the universal ribosomal protein uS3 family. Part of the 30S ribosomal subunit.

The protein resides in the plastid. The protein localises to the chloroplast. In Adiantum capillus-veneris (Maidenhair fern), this protein is Small ribosomal subunit protein uS3c (rps3).